Reading from the N-terminus, the 117-residue chain is DNA-directed RNA polymerase subunit omega (117 aa).

The protein belongs to the RNA polymerase subunit omega family. As to quaternary structure, the RNAP catalytic core consists of 2 alpha, 1 beta, 1 beta' and 1 omega subunit. When a sigma factor is associated with the core the holoenzyme is formed, which can initiate transcription.

It carries out the reaction RNA(n) + a ribonucleoside 5'-triphosphate = RNA(n+1) + diphosphate. Its function is as follows. Promotes RNA polymerase assembly. Latches the N- and C-terminal regions of the beta' subunit thereby facilitating its interaction with the beta and alpha subunits. The protein is DNA-directed RNA polymerase subunit omega of Ruegeria sp. (strain TM1040) (Silicibacter sp.).